A 680-amino-acid chain; its full sequence is Multisubstrate pseudouridine synthase 7 (680 aa).

Composition is skewed to basic and acidic residues over residues 1 to 30 and 99 to 116; these read MSQE…RNGL and ILSK…KDSS. Disordered stretches follow at residues 1–42, 99–136, and 206–229; these read MSQE…DLSG, ILSK…EPAT, and TKGN…RRDP. The segment covering 206–216 has biased composition (polar residues); that stretch reads TKGNGTFTVSK. Residue Asp-277 is the Nucleophile of the active site. The region spanning 358–596 is the TRUD domain; the sequence is GFINYFGLQR…PGDYRKLLVR (239 aa).

The protein belongs to the pseudouridine synthase TruD family.

It localises to the nucleus. Its subcellular location is the cytoplasm. It catalyses the reaction uridine in 5S rRNA = pseudouridine in 5S rRNA. The enzyme catalyses uridine in snRNA = pseudouridine in snRNA. It carries out the reaction uridine(13) in tRNA = pseudouridine(13) in tRNA. The catalysed reaction is a uridine in mRNA = a pseudouridine in mRNA. Catalyzes pseudouridylation at position 35 in U2 snRNA stem-loop II region which induces particular conformation of the mRNA-U2 snRNA duplex and places the nucleophile in an accessible position for the first step of splicing. Also catalyzes pseudouridylation at position 56 in U2 snRNA. Also catalyzes pseudouridylation at position 50 in 5S rRNA, position 13 in cytoplasmic tRNAs, and position 35 in pre-tRNA(Tyr). Pseudouridine residues in tRNAs may stabilize the local RNA conformation, favor interactions with protein partners and play an important role in the stabilization of the codon-anticodon interaction with mRNA. Also catalyzes pseudouridylation of mRNAs in response to heat shock: mediates pseudouridylation of mRNAs with the consensus sequence 5'-UGUAR-3'. In Schizosaccharomyces pombe (strain 972 / ATCC 24843) (Fission yeast), this protein is Multisubstrate pseudouridine synthase 7 (pus7).